The primary structure comprises 459 residues: WPP domain-interacting protein 3 (459 aa).

Over residues 1–17 the composition is skewed to polar residues; it reads MNESVPDSVEDNGNSVP. Residues 1–78 form a disordered region; the sequence is MNESVPDSVE…GPVRDEAAPV (78 aa). The segment covering 52 to 66 has biased composition (basic residues); the sequence is STRKGFGLKKWRRIK. 2 consecutive short sequence motifs (nuclear localization signal) follow at residues 60 to 61 and 63 to 64; these read KK and RR. Basic and acidic residues predominate over residues 67–78; it reads RDGPVRDEAAPV. The Nuclear localization signal 3 signature appears at 86–87; it reads KR. 2 disordered regions span residues 240 to 266 and 308 to 330; these read KEEV…NNNH and TDEL…TSSG. The span at 251–266 shows a compositional bias: basic and acidic residues; the sequence is NGNKEDDGESKKNNNH. The segment covering 308-319 has biased composition (polar residues); it reads TDELSSDQPSHQ. A coiled-coil region spans residues 331–375; sequence SKALILKEKVKLLEHKLEEARAALEAKEARIQELENSKIESELEC. Residues 426 to 459 enclose the KASH domain; it reads KLGFYILTQLILLVSILRFLVLQFSPASRLVIPT. A helical membrane pass occupies residues 427 to 447; the sequence is LGFYILTQLILLVSILRFLVL.

Component of Ran complexes at least composed of WIT1 or WIT2, RANGAP1 or RANGAP2, and WIP1 or WIP2 or WIP3. Interacts with RANGAP1, WPP1/MAF1, and WPP2/MAF2. Interacts with SUN1 and SUN2. Core component of the LINC complex which is composed of inner nuclear membrane SUN domain-containing proteins coupled to outer nuclear membrane WIP and WIT proteins. The LINC complex also involves nucleoskeletal proteins CRWN/LINC and possibly KAKU4 and the cytoskeletal myosin KAKU1. Interacts with WIT2. Expressed in seedlings, roots, stems, leaves, and flowers.

Its subcellular location is the nucleus envelope. It localises to the nucleus membrane. In terms of biological role, mediates and enhances the nuclear envelope docking of RANGAP proteins mediated by WIT1 and WIT2 in the undifferentiated cells of root tips. As component of the SUN-WIP-WIT2-KAKU1 complex, mediates the transfer of cytoplasmic forces to the nuclear envelope (NE), leading to nuclear shape changes. The polypeptide is WPP domain-interacting protein 3 (WIP3) (Arabidopsis thaliana (Mouse-ear cress)).